We begin with the raw amino-acid sequence, 271 residues long: Solute carrier family 66 member 2 (271 aa).

3 consecutive transmembrane segments (helical) span residues 7 to 27, 49 to 69, and 72 to 92; these read GWLL…AMVF, FSTH…LFWF, and HFES…LLML. The 67-residue stretch at 14–80 folds into the PQ-loop 1 domain; the sequence is HQLVSWVAAG…RHFESPLLWQ (67 aa). The residue at position 110 (Ser-110) is a Phosphoserine. The next 3 helical transmembrane spans lie at 145-165, 168-188, and 232-252; these read DYVQ…YLSI, ALFV…LGVP, and VCGL…YAFA. Residues 178–233 form the PQ-loop 2 domain; it reads AVLTEAMLGVPQLYRNYCHRSTEGMSLKMVLMWTSGDTFKTAYFLLNGAPLQFSVC.

It localises to the membrane. This Mus musculus (Mouse) protein is Solute carrier family 66 member 2 (Slc66a2).